The primary structure comprises 276 residues: Myoblast determination protein 1 homolog 1 (276 aa).

The bHLH domain maps to 84-135; the sequence is DRRKAATMRERRRLSKVNDAFETLKRCTSTNPNQRLPKVDILRNAISYIESL. The interval 228 to 253 is disordered; sequence CPAVQDGSEGSSPCSPGDGSIASENG.

As to quaternary structure, efficient DNA binding requires dimerization with another bHLH protein.

The protein resides in the nucleus. In terms of biological role, may act as a transcriptional activator that promotes transcription of muscle-specific target genes and plays a role in muscle differentiation. This chain is Myoblast determination protein 1 homolog 1 (myod1), found in Oncorhynchus mykiss (Rainbow trout).